We begin with the raw amino-acid sequence, 955 residues long: Glycine dehydrogenase (decarboxylating) (955 aa).

Lys-705 is modified (N6-(pyridoxal phosphate)lysine).

The protein belongs to the GcvP family. The glycine cleavage system is composed of four proteins: P, T, L and H. The cofactor is pyridoxal 5'-phosphate.

The catalysed reaction is N(6)-[(R)-lipoyl]-L-lysyl-[glycine-cleavage complex H protein] + glycine + H(+) = N(6)-[(R)-S(8)-aminomethyldihydrolipoyl]-L-lysyl-[glycine-cleavage complex H protein] + CO2. Functionally, the glycine cleavage system catalyzes the degradation of glycine. The P protein binds the alpha-amino group of glycine through its pyridoxal phosphate cofactor; CO(2) is released and the remaining methylamine moiety is then transferred to the lipoamide cofactor of the H protein. The chain is Glycine dehydrogenase (decarboxylating) from Aliivibrio salmonicida (strain LFI1238) (Vibrio salmonicida (strain LFI1238)).